The primary structure comprises 101 residues: Small ribosomal subunit protein bS18c (101 aa).

This sequence belongs to the bacterial ribosomal protein bS18 family. As to quaternary structure, component of the chloroplast small ribosomal subunit (SSU). Mature 70S chloroplast ribosomes of higher plants consist of a small (30S) and a large (50S) subunit. The 30S small subunit contains 1 molecule of ribosomal RNA (16S rRNA) and 24 different proteins. The 50S large subunit contains 3 rRNA molecules (23S, 5S and 4.5S rRNA) and 33 different proteins.

Its subcellular location is the plastid. It localises to the chloroplast. In terms of biological role, component of the chloroplast ribosome (chloro-ribosome), a dedicated translation machinery responsible for the synthesis of chloroplast genome-encoded proteins, including proteins of the transcription and translation machinery and components of the photosynthetic apparatus. This chain is Small ribosomal subunit protein bS18c (RPS18), found in Spinacia oleracea (Spinach).